The primary structure comprises 110 residues: Large ribosomal subunit protein uL22 (110 aa).

It belongs to the universal ribosomal protein uL22 family. In terms of assembly, part of the 50S ribosomal subunit.

Functionally, this protein binds specifically to 23S rRNA; its binding is stimulated by other ribosomal proteins, e.g. L4, L17, and L20. It is important during the early stages of 50S assembly. It makes multiple contacts with different domains of the 23S rRNA in the assembled 50S subunit and ribosome. Its function is as follows. The globular domain of the protein is located near the polypeptide exit tunnel on the outside of the subunit, while an extended beta-hairpin is found that lines the wall of the exit tunnel in the center of the 70S ribosome. In Delftia acidovorans (strain DSM 14801 / SPH-1), this protein is Large ribosomal subunit protein uL22.